Consider the following 460-residue polypeptide: Protein btn1 (460 aa).

11 consecutive transmembrane segments (helical) span residues 42-62, 76-96, 105-125, 135-155, 164-184, 195-215, 287-307, 323-343, 356-376, 378-398, and 428-448; these read VCVA…VILS, VVLL…PYFI, IIIF…SPPY, LAGI…FVGL, LAAW…AYAL, ATLL…FMVL, GLFF…YTIN, FAHF…GVFI, LYLP…QAVF, FIPS…LGGL, and AAGI…LCDW.

The protein belongs to the battenin family.

It localises to the vacuole membrane. Involved in vacuolar transport and vacuole pH homeostasis. Also required for cytokinesis. This is Protein btn1 (btn1) from Aspergillus fumigatus (strain ATCC MYA-4609 / CBS 101355 / FGSC A1100 / Af293) (Neosartorya fumigata).